Reading from the N-terminus, the 318-residue chain is NADH-ubiquinone oxidoreductase chain 1 (318 aa).

8 helical membrane-spanning segments follow: residues 2 to 22, 70 to 90, 100 to 120, 147 to 167, 171 to 191, 223 to 243, 253 to 273, and 294 to 314; these read FFIN…FLTL, MFIL…IPLP, LGVL…LWSG, AIIL…TLII, HMWL…STLA, FFLA…ILFF, ELYS…FLWI, and LPLT…TASI.

The protein belongs to the complex I subunit 1 family. As to quaternary structure, core subunit of respiratory chain NADH dehydrogenase (Complex I) which is composed of 45 different subunits.

It is found in the mitochondrion inner membrane. It carries out the reaction a ubiquinone + NADH + 5 H(+)(in) = a ubiquinol + NAD(+) + 4 H(+)(out). Functionally, core subunit of the mitochondrial membrane respiratory chain NADH dehydrogenase (Complex I) which catalyzes electron transfer from NADH through the respiratory chain, using ubiquinone as an electron acceptor. Essential for the catalytic activity and assembly of complex I. The chain is NADH-ubiquinone oxidoreductase chain 1 (MT-ND1) from Canis lupus familiaris (Dog).